We begin with the raw amino-acid sequence, 299 residues long: Acetylglutamate kinase (299 aa).

Substrate contacts are provided by residues 64-65 (GG), Arg-86, and Asn-197.

Belongs to the acetylglutamate kinase family. ArgB subfamily.

The protein resides in the cytoplasm. It catalyses the reaction N-acetyl-L-glutamate + ATP = N-acetyl-L-glutamyl 5-phosphate + ADP. Its pathway is amino-acid biosynthesis; L-arginine biosynthesis; N(2)-acetyl-L-ornithine from L-glutamate: step 2/4. In terms of biological role, catalyzes the ATP-dependent phosphorylation of N-acetyl-L-glutamate. The protein is Acetylglutamate kinase of Persephonella marina (strain DSM 14350 / EX-H1).